The following is a 200-amino-acid chain: Recombination protein RecR (200 aa).

The C4-type zinc-finger motif lies at 57–72; that stretch reads CSECRTFTEEDTCAIC. A Toprim domain is found at 81 to 176; that stretch reads GEMCIVESPA…PASRIAHGVP (96 aa).

This sequence belongs to the RecR family.

Functionally, may play a role in DNA repair. It seems to be involved in an RecBC-independent recombinational process of DNA repair. It may act with RecF and RecO. The protein is Recombination protein RecR of Aliivibrio fischeri (strain ATCC 700601 / ES114) (Vibrio fischeri).